The following is a 334-amino-acid chain: Holliday junction branch migration complex subunit RuvB (334 aa).

Positions 4–184 are large ATPase domain (RuvB-L); that stretch reads ADRLISAGVI…FGIVQRLEFY (181 aa). ATP contacts are provided by residues Ile23, Arg24, Gly65, Lys68, Thr69, Thr70, 131–133, Arg174, Tyr184, and Arg221; that span reads EDY. Position 69 (Thr69) interacts with Mg(2+). Residues 185 to 255 are small ATPAse domain (RuvB-S); it reads QVADLEHIVS…VAMKALDMLN (71 aa). The head domain (RuvB-H) stretch occupies residues 258-334; the sequence is AEGFDFMDRK…YKHFGITREE (77 aa). Positions 294, 313, and 318 each coordinate DNA.

This sequence belongs to the RuvB family. Homohexamer. Forms an RuvA(8)-RuvB(12)-Holliday junction (HJ) complex. HJ DNA is sandwiched between 2 RuvA tetramers; dsDNA enters through RuvA and exits via RuvB. An RuvB hexamer assembles on each DNA strand where it exits the tetramer. Each RuvB hexamer is contacted by two RuvA subunits (via domain III) on 2 adjacent RuvB subunits; this complex drives branch migration. In the full resolvosome a probable DNA-RuvA(4)-RuvB(12)-RuvC(2) complex forms which resolves the HJ.

Its subcellular location is the cytoplasm. It catalyses the reaction ATP + H2O = ADP + phosphate + H(+). The RuvA-RuvB-RuvC complex processes Holliday junction (HJ) DNA during genetic recombination and DNA repair, while the RuvA-RuvB complex plays an important role in the rescue of blocked DNA replication forks via replication fork reversal (RFR). RuvA specifically binds to HJ cruciform DNA, conferring on it an open structure. The RuvB hexamer acts as an ATP-dependent pump, pulling dsDNA into and through the RuvAB complex. RuvB forms 2 homohexamers on either side of HJ DNA bound by 1 or 2 RuvA tetramers; 4 subunits per hexamer contact DNA at a time. Coordinated motions by a converter formed by DNA-disengaged RuvB subunits stimulates ATP hydrolysis and nucleotide exchange. Immobilization of the converter enables RuvB to convert the ATP-contained energy into a lever motion, pulling 2 nucleotides of DNA out of the RuvA tetramer per ATP hydrolyzed, thus driving DNA branch migration. The RuvB motors rotate together with the DNA substrate, which together with the progressing nucleotide cycle form the mechanistic basis for DNA recombination by continuous HJ branch migration. Branch migration allows RuvC to scan DNA until it finds its consensus sequence, where it cleaves and resolves cruciform DNA. The chain is Holliday junction branch migration complex subunit RuvB from Yersinia enterocolitica serotype O:8 / biotype 1B (strain NCTC 13174 / 8081).